The following is a 107-amino-acid chain: Nucleoid-associated protein RC1_2305 (107 aa).

The protein belongs to the YbaB/EbfC family. In terms of assembly, homodimer.

The protein localises to the cytoplasm. It is found in the nucleoid. In terms of biological role, binds to DNA and alters its conformation. May be involved in regulation of gene expression, nucleoid organization and DNA protection. The chain is Nucleoid-associated protein RC1_2305 from Rhodospirillum centenum (strain ATCC 51521 / SW).